Here is a 359-residue protein sequence, read N- to C-terminus: Peptide chain release factor 1 (359 aa).

The residue at position 233 (glutamine 233) is an N5-methylglutamine.

It belongs to the prokaryotic/mitochondrial release factor family. Methylated by PrmC. Methylation increases the termination efficiency of RF1.

It localises to the cytoplasm. Functionally, peptide chain release factor 1 directs the termination of translation in response to the peptide chain termination codons UAG and UAA. This is Peptide chain release factor 1 from Cytophaga hutchinsonii (strain ATCC 33406 / DSM 1761 / CIP 103989 / NBRC 15051 / NCIMB 9469 / D465).